A 74-amino-acid chain; its full sequence is MKLTCVLIIAVLFLTAYQLATAASHAKGKQKHRALRPADKHFRFTKRCNNRGGGCSQHPHCCSGTCNKTFGVCL.

Residues methionine 1–alanine 22 form the signal peptide. Positions alanine 23–arginine 47 are excised as a propeptide. 3 cysteine pairs are disulfide-bonded: cysteine 48–cysteine 62, cysteine 55–cysteine 66, and cysteine 61–cysteine 73.

Expressed by the venom duct.

The protein resides in the secreted. Functionally, when injected intracranially in mice, induces a series of symptoms such as quivering, climbing, scratching, barrel rolling and paralysis of limbs. Unexpectedly, no effect is observed on ionic currents when tested on locust DUM neuron. This chain is Conotoxin VxVIA, found in Conus vexillum (Flag cone).